The chain runs to 224 residues: Ribonuclease 3 (224 aa).

The RNase III domain occupies 4–127 (IEKLEQSLTY…IIGAIHLEAG (124 aa)). Glu40 is a Mg(2+) binding site. Asp44 is a catalytic residue. Asp113 and Glu116 together coordinate Mg(2+). The active site involves Glu116. A DRBM domain is found at 154-223 (DYKTKLQEIT…AKIALEKLGA (70 aa)).

The protein belongs to the ribonuclease III family. Homodimer. It depends on Mg(2+) as a cofactor.

The protein localises to the cytoplasm. The catalysed reaction is Endonucleolytic cleavage to 5'-phosphomonoester.. Functionally, digests double-stranded RNA. Involved in the processing of primary rRNA transcript to yield the immediate precursors to the large and small rRNAs (23S and 16S). Also processes some mRNAs, and tRNAs when they are encoded in the rRNA operon. CRISPR (clustered regularly interspaced short palindromic repeat) is an adaptive immune system that provides protection against mobile genetic elements (viruses, transposable elements and conjugative plasmids). CRISPR clusters contain spacers, sequences complementary to antecedent mobile elements, and target invading nucleic acids. CRISPR clusters are transcribed and processed into CRISPR RNA (crRNA). In this organism endogenous ribonuclease 3 and Cas9 are required for correct coprocessing of pre-crRNA and the trans-encoded small RNA (tracrRNA). Cas9, crRNA and tracrRNA are required for cleavage of invading DNA. Complements pre-crRNA and tracrRNA coprocessing defects in an rnc deletion in S.pyogenes strain 370. This chain is Ribonuclease 3, found in Campylobacter jejuni subsp. jejuni serotype O:2 (strain ATCC 700819 / NCTC 11168).